We begin with the raw amino-acid sequence, 378 residues long: 3-ketosteroid-9-alpha-monooxygenase, oxygenase component (378 aa).

The Rieske domain maps to Trp26–Val128. 4 residues coordinate [2Fe-2S] cluster: Cys67, His69, Cys86, and His89. Positions 175, 181, 186, and 305 each coordinate Fe cation.

Homotrimer. The two-component system 3-ketosteroid-9-alpha-monooxygenase is composed of an oxygenase component KshA and a reductase component KshB. The cofactor is [2Fe-2S] cluster. Fe cation serves as cofactor.

The catalysed reaction is androsta-1,4-diene-3,17-dione + 2 reduced [2Fe-2S]-[ferredoxin] + O2 + 2 H(+) = 9alpha-hydroxyandrosta-1,4-diene-3,17-dione + 2 oxidized [2Fe-2S]-[ferredoxin] + H2O. KSH activity is completely inhibited by zinc ions. KshA is specifically inhibited by Fe(3+), Co(2+), Zn(2+) and Ni(2+) ions. Its function is as follows. In vitro, catalyzes the introduction of a 9alpha-hydroxyl moiety into the ring B of 3-ketosteroid substrates such as 1,4-androstadiene-3,17-dione (ADD), 4-androstene-3,17-dione (AD), 4-androstene-17beta-ol-3-one (testosterone), 4-pregnene-3,20-dione (progesterone), 19-nor-4-androstene-3,17-dione (nordion), 1-(5alpha)-androstene-3,17-dione, 5alpha-androstane-3,17-dione and 5beta-androstane-3,17-dione. KSH has the highest activity with 3-keto-delta4 steroid substrates. This chain is 3-ketosteroid-9-alpha-monooxygenase, oxygenase component, found in Rhodococcus rhodochrous.